We begin with the raw amino-acid sequence, 273 residues long: Light-independent protochlorophyllide reductase iron-sulfur ATP-binding protein (273 aa).

ATP contacts are provided by residues Gly12 to Thr17 and Lys41. Ser16 contacts Mg(2+). Residues Cys97 and Cys131 each coordinate [4Fe-4S] cluster. Position 182-183 (Asn182–Arg183) interacts with ATP.

It belongs to the NifH/BchL/ChlL family. In terms of assembly, homodimer. Protochlorophyllide reductase is composed of three subunits; BchL, BchN and BchB. [4Fe-4S] cluster is required as a cofactor.

It catalyses the reaction chlorophyllide a + oxidized 2[4Fe-4S]-[ferredoxin] + 2 ADP + 2 phosphate = protochlorophyllide a + reduced 2[4Fe-4S]-[ferredoxin] + 2 ATP + 2 H2O. It functions in the pathway porphyrin-containing compound metabolism; bacteriochlorophyll biosynthesis (light-independent). Component of the dark-operative protochlorophyllide reductase (DPOR) that uses Mg-ATP and reduced ferredoxin to reduce ring D of protochlorophyllide (Pchlide) to form chlorophyllide a (Chlide). This reaction is light-independent. The L component serves as a unique electron donor to the NB-component of the complex, and binds Mg-ATP. In Chloroflexus aurantiacus (strain ATCC 29364 / DSM 637 / Y-400-fl), this protein is Light-independent protochlorophyllide reductase iron-sulfur ATP-binding protein.